The primary structure comprises 108 residues: Large ribosomal subunit protein uL24 (108 aa).

The protein belongs to the universal ribosomal protein uL24 family. As to quaternary structure, part of the 50S ribosomal subunit.

One of two assembly initiator proteins, it binds directly to the 5'-end of the 23S rRNA, where it nucleates assembly of the 50S subunit. Functionally, one of the proteins that surrounds the polypeptide exit tunnel on the outside of the subunit. In Desulfosudis oleivorans (strain DSM 6200 / JCM 39069 / Hxd3) (Desulfococcus oleovorans), this protein is Large ribosomal subunit protein uL24.